A 383-amino-acid chain; its full sequence is MAKHLFTSESVSEGHPDKIADQISDAVLDAILEQDPKARVACETYVKTGMVLVGGEVTTSAWVDIEEITRKTVREIGYTHSDMGFDADSCAVLNAIGKQSPDINQGVDRADPAEQGAGDQGLMFGYANNETDVLMPAPITYAHALVKRQSEVRKDGTLPWLRPDAKSQVTFAYEDGKIVGIDAIVLSTQHREDVTQADLIEGVMETIIKPVLPAQWLNKDTKYFINPTGRFVIGGPVGDCGLTGRKIIVDTYGGMARHGGGAFSGKDPSKVDRSAAYAARYVAKNIVAAGLADRCEIQVSYAIGVAEPTSISIETFGTGKVSEEVLIKLVRQHFELRPYGLTAMLDLARPIYQQTAAYGHFGREGFPWEATDKAEMLRADAGL.

Residue His-15 participates in ATP binding. Residue Asp-17 coordinates Mg(2+). Glu-43 lines the K(+) pocket. L-methionine contacts are provided by Glu-56 and Gln-99. Positions 99–109 are flexible loop; that stretch reads QSPDINQGVDR. ATP-binding positions include 164–166, 230–231, Asp-239, 245–246, Ala-262, and Lys-266; these read DAK, RF, and RK. An L-methionine-binding site is contributed by Asp-239. L-methionine is bound at residue Lys-270.

This sequence belongs to the AdoMet synthase family. As to quaternary structure, homotetramer; dimer of dimers. The cofactor is Mg(2+). K(+) serves as cofactor.

It is found in the cytoplasm. The enzyme catalyses L-methionine + ATP + H2O = S-adenosyl-L-methionine + phosphate + diphosphate. The protein operates within amino-acid biosynthesis; S-adenosyl-L-methionine biosynthesis; S-adenosyl-L-methionine from L-methionine: step 1/1. Catalyzes the formation of S-adenosylmethionine (AdoMet) from methionine and ATP. The overall synthetic reaction is composed of two sequential steps, AdoMet formation and the subsequent tripolyphosphate hydrolysis which occurs prior to release of AdoMet from the enzyme. In Shewanella denitrificans (strain OS217 / ATCC BAA-1090 / DSM 15013), this protein is S-adenosylmethionine synthase.